We begin with the raw amino-acid sequence, 311 residues long: Methionyl-tRNA formyltransferase (311 aa).

Position 111–114 (111–114 (SLLP)) interacts with (6S)-5,6,7,8-tetrahydrofolate.

This sequence belongs to the Fmt family.

The enzyme catalyses L-methionyl-tRNA(fMet) + (6R)-10-formyltetrahydrofolate = N-formyl-L-methionyl-tRNA(fMet) + (6S)-5,6,7,8-tetrahydrofolate + H(+). Attaches a formyl group to the free amino group of methionyl-tRNA(fMet). The formyl group appears to play a dual role in the initiator identity of N-formylmethionyl-tRNA by promoting its recognition by IF2 and preventing the misappropriation of this tRNA by the elongation apparatus. The polypeptide is Methionyl-tRNA formyltransferase (Caldicellulosiruptor saccharolyticus (strain ATCC 43494 / DSM 8903 / Tp8T 6331)).